Reading from the N-terminus, the 351-residue chain is MASTGSQASDIDEIFGFFNDGEPPTKKPRKLLPSLKTKKPRELVLVIGTGISAAVAPQVPALKSWKGLIQALLDAAIDFDLLEDEESKKFQKCLHEDKNLVHVAHDLIQKLSPRTSNVRSTFFKDCLYEVFDDLESKMEDSGKQLLQSVLHLMENGALVLTTNFDNLLELYAADQGKQLESLDLTDEKKVLEWAQEKRKLSVLHIHGVYTNPSGIVLHPAGYQNVLRNTEVMREIQKLYENKSFLFLGCGWTVDDTTFQALFLEAVKHKSDLEHFMLVRRGDVDEFKKLRENMLDKGIKVISYGDDYADLPEYFKRLTCEISTRGTSAGMVREGQLNGSSAAHSEIRGCST.

Ala2 carries the N-acetylalanine modification. Residue Ser9 is modified to Phosphoserine.

This sequence belongs to the FAM118 family.

The protein localises to the nucleus. It localises to the cajal body. May play a role in Cajal bodies formation. In Homo sapiens (Human), this protein is Protein FAM118B (FAM118B).